Reading from the N-terminus, the 388-residue chain is Chalcone synthase (388 aa).

Cys164 is an active-site residue.

This sequence belongs to the thiolase-like superfamily. Chalcone/stilbene synthases family.

The catalysed reaction is (E)-4-coumaroyl-CoA + 3 malonyl-CoA + 3 H(+) = 2',4,4',6'-tetrahydroxychalcone + 3 CO2 + 4 CoA. It functions in the pathway secondary metabolite biosynthesis; flavonoid biosynthesis. Its function is as follows. The primary product of this enzyme is 4,2',4',6'-tetrahydroxychalcone (also termed naringenin-chalcone or chalcone) which can under specific conditions spontaneously isomerize into naringenin. This chain is Chalcone synthase (CHS), found in Vigna unguiculata (Cowpea).